Reading from the N-terminus, the 374-residue chain is Chaperone protein DnaJ (374 aa).

Residues 5–70 (DYYEVLGLEK…DKKANYDRFG (66 aa)) enclose the J domain. A CR-type zinc finger spans residues 137–219 (GVEKSINITR…CHGAGHVRKK (83 aa)). 8 residues coordinate Zn(2+): Cys-150, Cys-153, Cys-167, Cys-170, Cys-193, Cys-196, Cys-207, and Cys-210. 4 CXXCXGXG motif repeats span residues 150-157 (CETCGGTG), 167-174 (CDKCGGTG), 193-200 (CDKCGGRG), and 207-214 (CHECHGAG).

This sequence belongs to the DnaJ family. As to quaternary structure, homodimer. Requires Zn(2+) as cofactor.

The protein resides in the cytoplasm. Functionally, participates actively in the response to hyperosmotic and heat shock by preventing the aggregation of stress-denatured proteins and by disaggregating proteins, also in an autonomous, DnaK-independent fashion. Unfolded proteins bind initially to DnaJ; upon interaction with the DnaJ-bound protein, DnaK hydrolyzes its bound ATP, resulting in the formation of a stable complex. GrpE releases ADP from DnaK; ATP binding to DnaK triggers the release of the substrate protein, thus completing the reaction cycle. Several rounds of ATP-dependent interactions between DnaJ, DnaK and GrpE are required for fully efficient folding. Also involved, together with DnaK and GrpE, in the DNA replication of plasmids through activation of initiation proteins. The protein is Chaperone protein DnaJ of Clostridium acetobutylicum (strain ATCC 824 / DSM 792 / JCM 1419 / IAM 19013 / LMG 5710 / NBRC 13948 / NRRL B-527 / VKM B-1787 / 2291 / W).